The chain runs to 341 residues: Bis(monoacylglycero)phosphate synthase CLN5 (341 aa).

The Cytoplasmic portion of the chain corresponds to 1-13 (MLRGGPCGAHWRP). Residues 14 to 30 (ALALALLGLATILGASP) form a helical; Signal-anchor for type II membrane protein membrane-spanning segment. Residues 31-341 (TSGQRWPVPY…PTRHTTFTDL (311 aa)) lie on the Lumenal side of the membrane. Intrachain disulfides connect cysteine 53/cysteine 142 and cysteine 60/cysteine 148. Histidine 100 acts as the Proton acceptor in catalysis. Asparagine 113, asparagine 126, asparagine 161, and asparagine 186 each carry an N-linked (GlcNAc...) asparagine glycan. Residue cysteine 214 is the Nucleophile; Acyl-thioester intermediate of the active site. N-linked (GlcNAc...) asparagine glycosylation is found at asparagine 238, asparagine 254, and asparagine 264. Residues 287 to 326 (FLMNFLKIFDTVIIHRQFYLFYNFEYWFLPMKPPFVKITY) are membrane-anchoring.

This sequence belongs to the CLN5 family. As to quaternary structure, multimer. Interacts with PPT1, TPP1, CLN3, CLN6, CLN8, ATP5F1A and ATP5F1B. Interacts with SORT1, RAB5A and RAB7A. N-glycosylated with both high mannose and complex type sugars. Glycosylation is important for proper folding and trafficking to the lysosomes. Post-translationally, the type II membrane signal anchor is proteolytically cleaved to produce a mature form that is transported to the lysosomes (Bis(monoacylglycero)phosphate synthase CLN5, secreted form). In terms of processing, can undergo proteolytic cleavage at the C-terminus, probably by a cysteine protease and may involve the removal of approximately 10-15 residues from the C-terminal end. As to expression, heart, kidney, liver, spleen, muscle and rectum (at protein level).

It is found in the lysosome. The protein localises to the membrane. The catalysed reaction is S-hexadecanoyl-L-cysteinyl-[protein] + H2O = L-cysteinyl-[protein] + hexadecanoate + H(+). It carries out the reaction 2 1-acyl-sn-glycero-3-phospho-(1'-sn-glycerol) = 1-acyl-sn-glycero-3-phospho-(3'-acyl-sn-1'-glycerol) + sn-glycero-3-phospho-(1'-sn-glycerol). It catalyses the reaction 2 1-(9Z-octadecenoyl)-sn-glycero-3-phospho-(1'-sn-glycerol) = 1-(9Z-octadecenoyl)-sn-glycero-3-phospho-(3'-(9Z-octadecenoyl)-1'-sn-glycerol) + sn-glycero-3-phospho-(1'-sn-glycerol). The enzyme catalyses 2 1-octadecanoyl-sn-glycero-3-phospho-(1'-sn-glycerol) = 1-octadecanoyl-sn-glycero-3-phospho-(3'-octadecanoyl-1'-sn-glycerol) + sn-glycero-3-phospho-(1'-sn-glycerol). The catalysed reaction is 2 1-hexadecanoyl-sn-glycero-3-phospho-(1'-sn-glycerol) = 1-hexadecanoyl-sn-glycero-3-phospho-(3'-hexadecanoyl-1'-sn-glycerol) + sn-glycero-3-phospho-(1'-sn-glycerol). It carries out the reaction 2 1-tetradecanoyl-sn-glycero-3-phospho-(1'-sn-glycerol) = 1-tetradecanoyl-sn-glycero-3-phospho-(3'-tetradecanoyl-1'-sn-glycerol) + sn-glycero-3-phospho-(1'-sn-glycerol). Its function is as follows. Catalyzes the synthesis of bis(monoacylglycero)phosphate (BMP) via transacylation of 2 molecules of lysophosphatidylglycerol (LPG). BMP also known as lysobisphosphatidic acid plays a key role in the formation of intraluminal vesicles and in maintaining intracellular cholesterol homeostasis. Can use only LPG as the exclusive lysophospholipid acyl donor for base exchange and displays BMP synthase activity towards various LPGs (LPG 14:0, LPG 16:0, LPG 18:0, LPG 18:1) with a higher preference for longer chain lengths. Plays a role in influencing the retrograde trafficking of lysosomal sorting receptors SORT1 and IGF2R from the endosomes to the trans-Golgi network by controlling the recruitment of retromer complex to the endosomal membrane. Regulates the localization and activation of RAB7A which is required to recruit the retromer complex to the endosomal membrane. Functionally, exhibits palmitoyl protein thioesterase (S-depalmitoylation) activity in vitro and most likely plays a role in protein S-depalmitoylation. The polypeptide is Bis(monoacylglycero)phosphate synthase CLN5 (Cln5) (Mus musculus (Mouse)).